The following is a 428-amino-acid chain: GTPase Obg (428 aa).

One can recognise an Obg domain in the interval 1 to 158 (MFVDQVKIYV…RDVILELKVL (158 aa)). The segment at 117-145 (ARGGRGGRGNSRFATPTNPAPEIAENGEP) is disordered. Residues 159–329 (ADVGLVGFPS…LLFEVANLLE (171 aa)) form the OBG-type G domain. GTP contacts are provided by residues 165-172 (GFPSVGKS), 190-194 (FTTIV), 212-215 (DLPG), 282-285 (NKMD), and 310-312 (SAV). The Mg(2+) site is built by serine 172 and threonine 192. Positions 350–428 (KLETEGVKFD…ILEYEFEFID (79 aa)) constitute an OCT domain.

This sequence belongs to the TRAFAC class OBG-HflX-like GTPase superfamily. OBG GTPase family. In terms of assembly, monomer. Mg(2+) is required as a cofactor.

The protein resides in the cytoplasm. Its function is as follows. An essential GTPase which binds GTP, GDP and possibly (p)ppGpp with moderate affinity, with high nucleotide exchange rates and a fairly low GTP hydrolysis rate. Plays a role in control of the cell cycle, stress response, ribosome biogenesis and in those bacteria that undergo differentiation, in morphogenesis control. This is GTPase Obg from Bacillus cereus (strain ATCC 10987 / NRS 248).